We begin with the raw amino-acid sequence, 248 residues long: ATP synthase subunit a, chloroplastic (248 aa).

5 consecutive transmembrane segments (helical) span residues 35–55 (GQVF…SFLG), 94–114 (VPYI…GALI), 133–153 (INTT…AGLS), 202–222 (VFTL…GLFA), and 224–244 (SIQA…AMEG).

Belongs to the ATPase A chain family. As to quaternary structure, F-type ATPases have 2 components, CF(1) - the catalytic core - and CF(0) - the membrane proton channel. CF(1) has five subunits: alpha(3), beta(3), gamma(1), delta(1), epsilon(1). CF(0) has four main subunits: a, b, b' and c.

Its subcellular location is the plastid. It localises to the chloroplast thylakoid membrane. In terms of biological role, key component of the proton channel; it plays a direct role in the translocation of protons across the membrane. In Pyropia yezoensis (Susabi-nori), this protein is ATP synthase subunit a, chloroplastic.